Consider the following 417-residue polypeptide: NADH-quinone oxidoreductase subunit D (417 aa).

It belongs to the complex I 49 kDa subunit family. In terms of assembly, NDH-1 is composed of 14 different subunits. Subunits NuoB, C, D, E, F, and G constitute the peripheral sector of the complex.

It localises to the cell inner membrane. The catalysed reaction is a quinone + NADH + 5 H(+)(in) = a quinol + NAD(+) + 4 H(+)(out). In terms of biological role, NDH-1 shuttles electrons from NADH, via FMN and iron-sulfur (Fe-S) centers, to quinones in the respiratory chain. The immediate electron acceptor for the enzyme in this species is believed to be ubiquinone. Couples the redox reaction to proton translocation (for every two electrons transferred, four hydrogen ions are translocated across the cytoplasmic membrane), and thus conserves the redox energy in a proton gradient. In Burkholderia vietnamiensis (strain G4 / LMG 22486) (Burkholderia cepacia (strain R1808)), this protein is NADH-quinone oxidoreductase subunit D.